Here is a 439-residue protein sequence, read N- to C-terminus: Dihydroorotate dehydrogenase (quinone), mitochondrial (439 aa).

The N-terminal 22 residues, 1 to 22 (MMHRVGFNVIGRRSFFTVNARR), are a transit peptide targeting the mitochondrion. The helical transmembrane segment at 37–53 (LTALLLAGSAGYLYFMN) threads the bilayer. FMN-binding positions include 119–123 (AGLDK) and Ser143. A substrate-binding site is contributed by Lys123. Substrate is bound at residue 168 to 172 (NRYGF). FMN contacts are provided by Asn215 and Asn245. 245-250 (NVSSPN) is a binding site for substrate. Catalysis depends on Ser248, which acts as the Nucleophile. FMN-binding residues include Lys296 and Ser324. Substrate is bound at residue 325-326 (NT). FMN-binding positions include Gly350, Gly380, and 401–402 (YT).

The protein belongs to the dihydroorotate dehydrogenase family. Type 2 subfamily. It depends on FMN as a cofactor.

It localises to the mitochondrion inner membrane. It carries out the reaction (S)-dihydroorotate + a quinone = orotate + a quinol. Its pathway is pyrimidine metabolism; UMP biosynthesis via de novo pathway; orotate from (S)-dihydroorotate (quinone route): step 1/1. Its function is as follows. Catalyzes the conversion of dihydroorotate to orotate with quinone as electron acceptor. The polypeptide is Dihydroorotate dehydrogenase (quinone), mitochondrial (URA9) (Candida glabrata (strain ATCC 2001 / BCRC 20586 / JCM 3761 / NBRC 0622 / NRRL Y-65 / CBS 138) (Yeast)).